A 589-amino-acid polypeptide reads, in one-letter code: EZH inhibitory protein (589 aa).

Disordered regions lie at residues methionine 1–arginine 46, alanine 61–asparagine 548, and leucine 561–glycine 589. 2 stretches are compositionally biased toward gly residues: residues glycine 29 to glycine 38 and proline 105 to glycine 114. Residues glycine 147–alanine 161 are compositionally biased toward low complexity. Over residues leucine 193–threonine 204 the composition is skewed to polar residues. 4 stretches are compositionally biased toward low complexity: residues arginine 299–glutamate 308, arginine 325–glutamate 334, arginine 351–glutamate 360, and proline 374–serine 390. A Phosphoserine modification is found at serine 306. Basic and acidic residues predominate over residues methionine 426–glutamate 437. The span at serine 438 to serine 449 shows a compositional bias: acidic residues. A compositionally biased stretch (low complexity) spans glutamate 450–arginine 465. The interval arginine 482–serine 490 is sufficient for interaction with EZH2. A necessary and sufficient for inhibition of PRC2/EED-EZH1 and PRC2/EED-EZH2 complex activity region spans residues proline 484–lysine 503. The segment covering valine 509–proline 547 has biased composition (low complexity). Residues alanine 575 to glycine 589 are compositionally biased toward basic and acidic residues.

Interacts with PRC2/EED-EZH1 complex member EZH1 and with PRC2/EED-EZH2 complex member EZH2; the interaction blocks EZH1/EZH2 methyltransferase activity. Interacts (via C-terminus) with SUZ12 which is a member of the PRC2/EED-EZH1 and PRC2/EED-EZH2 complexes. Highly expressed in ovary with lower expression in testis and very low levels in other tissues tested including prostate, brain, kidney, spleen and liver. During spermatogenesis, expressed mainly in spermatogonia with very low expression in spermatocytes I and II.

Its subcellular location is the nucleus. The protein resides in the cytoplasm. In terms of biological role, inhibits PRC2/EED-EZH1 and PRC2/EED-EZH2 complex function by inhibiting EZH1/EZH2 methyltransferase activity, thereby causing down-regulation of histone H3 trimethylation at 'Lys-27' (H3K27me3). Probably inhibits methyltransferase activity by limiting the stimulatory effect of cofactors such as AEBP2 and JARID2. Inhibits H3K27me3 deposition during spermatogenesis and oogenesis. The sequence is that of EZH inhibitory protein from Mus musculus (Mouse).